The following is a 322-amino-acid chain: MIDNIWYKPQLGILSYILSPIAFIFSKIAHNRKIRLQNNQYKSKIPVIIVGNISVGGTGKTPVVRMFANQYLEQGKKPVIISRGYGAKAEKYPFEVDSKTPASVCGDEPAMLFDALGGKVPIVISPHRVDSVKYIEKNYPDADVIISDDGLQHYKLARTKEVVVVDASRMFGNGLCLPAGPLREPVERLKSVDQIIAIGNLDNQNYSELLNYNSNIVRAKIKATKFVNLVTKQSILIDSFYGKSIDAVAGIGNPDKFFSSLDELGVNIYHEHIFRDHHKYTPKDFEHFDPEQIVIMTYKDAIKCKDFAKSNWWYLDIALEFC.

54-61 (SVGGTGKT) provides a ligand contact to ATP.

This sequence belongs to the LpxK family.

It catalyses the reaction a lipid A disaccharide + ATP = a lipid IVA + ADP + H(+). The protein operates within glycolipid biosynthesis; lipid IV(A) biosynthesis; lipid IV(A) from (3R)-3-hydroxytetradecanoyl-[acyl-carrier-protein] and UDP-N-acetyl-alpha-D-glucosamine: step 6/6. Transfers the gamma-phosphate of ATP to the 4'-position of a tetraacyldisaccharide 1-phosphate intermediate (termed DS-1-P) to form tetraacyldisaccharide 1,4'-bis-phosphate (lipid IVA). The protein is Tetraacyldisaccharide 4'-kinase of Francisella philomiragia subsp. philomiragia (strain ATCC 25017 / CCUG 19701 / FSC 153 / O#319-036).